Reading from the N-terminus, the 337-residue chain is Integrase/recombinase (337 aa).

The Core-binding (CB) domain maps to 14–94 (VKVLDQLRER…ALLFFYGKVL (81 aa)). Residues 112 to 328 (RLPVVLTPDE…GGAGVRSPLD (217 aa)) form the Tyr recombinase domain. Residues R146, K171, H277, R280, and H303 contribute to the active site. Catalysis depends on Y312, which acts as the O-(3'-phospho-DNA)-tyrosine intermediate.

The protein belongs to the 'phage' integrase family.

Putative integrase believed to be involved in the insertion of antibiotic resistance genes into plasmids and transposons. The polypeptide is Integrase/recombinase (int) (Escherichia coli).